The chain runs to 468 residues: F-box/LRR-repeat protein At4g14096 (468 aa).

The F-box domain maps to 7-60; it reads RDIISSLPEAISCHILSFLPTKEAASTSVLSKKWRYLFAFVPNLDLDESVYLNP. LRR repeat units lie at residues 114 to 136, 138 to 167, 169 to 194, 216 to 241, 292 to 323, and 324 to 349; these read VSDL…MFLS, TLVR…YIDS, YFEK…VLDD, STQV…KFTD, TLYL…TIES, and NPEV…IFQG.

The protein is F-box/LRR-repeat protein At4g14096 of Arabidopsis thaliana (Mouse-ear cress).